Here is a 246-residue protein sequence, read N- to C-terminus: MTHSTRILLGVNIDHVATLRQARGTRYPDPVKAALDAEEAGADGITVHLREDRRHIQERDVLLLKDVLQTRMNFEMGVTEDMLAFAERIRPAHICLVPETRQELTTEGGLDVAGQEARIKAAVERLAKIGCEVSLFIDADERQIAASKRVGAPAIELHTGRYADAQTPTEVAEELQRVADGVAFGLAQGLVVNAGHGLHYHNVEAVAAIKGINELNIGHALVAHALFVGFKAAVAEMKALIVAAAR.

3-amino-2-oxopropyl phosphate is bound at residue Asn-12. 14–15 (DH) provides a ligand contact to 1-deoxy-D-xylulose 5-phosphate. Arg-23 provides a ligand contact to 3-amino-2-oxopropyl phosphate. His-48 serves as the catalytic Proton acceptor. 1-deoxy-D-xylulose 5-phosphate contacts are provided by Arg-50 and His-55. Residue Glu-75 is the Proton acceptor of the active site. Thr-105 lines the 1-deoxy-D-xylulose 5-phosphate pocket. The active-site Proton donor is the His-196. Residues Gly-197 and 218–219 (GH) each bind 3-amino-2-oxopropyl phosphate.

This sequence belongs to the PNP synthase family. Homooctamer; tetramer of dimers.

It localises to the cytoplasm. The catalysed reaction is 3-amino-2-oxopropyl phosphate + 1-deoxy-D-xylulose 5-phosphate = pyridoxine 5'-phosphate + phosphate + 2 H2O + H(+). It participates in cofactor biosynthesis; pyridoxine 5'-phosphate biosynthesis; pyridoxine 5'-phosphate from D-erythrose 4-phosphate: step 5/5. Functionally, catalyzes the complicated ring closure reaction between the two acyclic compounds 1-deoxy-D-xylulose-5-phosphate (DXP) and 3-amino-2-oxopropyl phosphate (1-amino-acetone-3-phosphate or AAP) to form pyridoxine 5'-phosphate (PNP) and inorganic phosphate. The sequence is that of Pyridoxine 5'-phosphate synthase from Pseudomonas syringae pv. syringae (strain B728a).